The primary structure comprises 364 residues: MSHTTHPYQKELEVATLAVKRASLLTKQLSDSIVQTARSGTLTKDDKSPVTIGDFASQAIINHAIKLNFPSDEIVGEEDSQELQENSSLADQVLSLIIKIQQETSVYNDVVGTLTDKNKVFQSIDYGNSQGGSKGRFWALDPIDGTKGFLRGDQFAVCLALIEDGKVVLGVIGCPNLSENIVSNEEHSGVVGGLYSAVKGVGSFYSELFKEGTEPLSQQKPIKMQNHTNPSQLKVVEGVEKGHSSHSTQAEIKAKLGFDPTTVAKQTVNLDSQVKYCVLASGQADIYLRLPVSDTYREKIWDHAAGNILIYESGGQVGDVTGAPLNFGNGRTLDSKGVIAANKEIFDKVIDAVTEIRKSSTPRV.

The Proton acceptor role is filled by D54. Mg(2+) contacts are provided by E77, D141, I143, and D144. The active-site Proton acceptor is the T146. Adenosine 3',5'-bisphosphate contacts are provided by T146, H243, S272, K275, R289, and D302. H243, S272, K275, R289, and D302 together coordinate AMP. Mg(2+) is bound at residue D302.

The protein belongs to the inositol monophosphatase superfamily. The cofactor is Mg(2+).

The catalysed reaction is 3'-phosphoadenylyl sulfate + H2O = adenosine 5'-phosphosulfate + phosphate. It carries out the reaction adenosine 3',5'-bisphosphate + H2O = AMP + phosphate. It catalyses the reaction adenosine 2',5'-bisphosphate + H2O = AMP + phosphate. Its function is as follows. Phosphatase that converts adenosine 3'-phosphate 5'-phosphosulfate (PAPS) to adenosine 5'-phosphosulfate (APS) and 3'(2')-phosphoadenosine 5'-phosphate (PAP) to AMP. Regulates the flux of sulfur in the sulfur-activation pathway by converting PAPS to APS. Involved in salt tolerance. The chain is 3'(2'),5'-bisphosphate nucleotidase 1 (HAL21) from Candida albicans (strain SC5314 / ATCC MYA-2876) (Yeast).